Consider the following 167-residue polypeptide: Large ribosomal subunit protein uL10 (167 aa).

Belongs to the universal ribosomal protein uL10 family. As to quaternary structure, part of the ribosomal stalk of the 50S ribosomal subunit. The N-terminus interacts with L11 and the large rRNA to form the base of the stalk. The C-terminus forms an elongated spine to which L12 dimers bind in a sequential fashion forming a multimeric L10(L12)X complex.

Functionally, forms part of the ribosomal stalk, playing a central role in the interaction of the ribosome with GTP-bound translation factors. The protein is Large ribosomal subunit protein uL10 of Chromohalobacter salexigens (strain ATCC BAA-138 / DSM 3043 / CIP 106854 / NCIMB 13768 / 1H11).